A 513-amino-acid polypeptide reads, in one-letter code: Probable DNA ligase (513 aa).

ATP is bound at residue E213. The active-site N6-AMP-lysine intermediate is K215. Residues R220, R235, E264, F304, R376, and K382 each coordinate ATP.

It belongs to the ATP-dependent DNA ligase family. Mg(2+) is required as a cofactor.

The enzyme catalyses ATP + (deoxyribonucleotide)n-3'-hydroxyl + 5'-phospho-(deoxyribonucleotide)m = (deoxyribonucleotide)n+m + AMP + diphosphate.. Functionally, DNA ligase that seals nicks in double-stranded DNA during DNA replication, DNA recombination and DNA repair. This chain is Probable DNA ligase, found in Anaeromyxobacter sp. (strain K).